Reading from the N-terminus, the 193-residue chain is MFEFITDEDERGQVGIGTLIVFIAMVLVAAIAAGVLINTAGYLQSKGSATGEEASAQVSNRINIVSAYGNVNNEKVDYVNLTVRQAAGADNINLTKSTIQWIGPDRATTLTYSSNSPSSLGENFTTESIKGSSADVLVDQSDRIKVIMYASGVSSNLGAGDEVQLTVTTQYGSKTTYWAQVPESLKDKNAVTL.

The propeptide occupies 1-12 (MFEFITDEDERG).

Belongs to the archaeal flagellin family. In terms of processing, glycosylated.

It is found in the archaeal flagellum. Flagellin is the subunit protein which polymerizes to form the filaments of archaeal flagella. The chain is Flagellin B1 (flaB1) from Halobacterium salinarum (strain ATCC 700922 / JCM 11081 / NRC-1) (Halobacterium halobium).